Reading from the N-terminus, the 244-residue chain is 5-oxoprolinase subunit A (244 aa).

Belongs to the LamB/PxpA family. In terms of assembly, forms a complex composed of PxpA, PxpB and PxpC.

It carries out the reaction 5-oxo-L-proline + ATP + 2 H2O = L-glutamate + ADP + phosphate + H(+). Catalyzes the cleavage of 5-oxoproline to form L-glutamate coupled to the hydrolysis of ATP to ADP and inorganic phosphate. This chain is 5-oxoprolinase subunit A, found in Salmonella dublin (strain CT_02021853).